Reading from the N-terminus, the 571-residue chain is MEYEVKKGKKGFVSPIRRLVFPKAGRRAACRSSVSRRPLHSMPLYPPDYLIDPQILLCDYLEKEVKFLGHLTWVTSSLNPSSRDELLQLLDTARQLKELPLKTTAEQDSILSLSARCLLLTWRDNEELILRIPTHEIAAASYLQDDALHLLVLKTGLGVDPVPAGVDASPGGAGRDPGPPGGAPEKRRVGTAERRHTICSLDWRMGWGGGAAEARAGGGGGGSLERQRAGARASGSWERRQTFSGSWERRHGGGGGGGGAGKPGGSWERRQAGSGGGGSWERRHPGPNPLDPQDPSPDAYCNLVILAVANRDAAEESCALICQVFQIIYGDQSIECVDRAGYHYTSTPERPWLCSRSESCHTDGTYAYDADFSCCSSFNGSQDTFEACYSGTSTPSFHGSHCSGSDHSSLGLEQLQDYMVTLRSKLGPLEIQQFAMLLREYRLGLPIQDYCTGLLKLYGDRRKFLLLGMRPFIPDQDIGYFEGFLEGVGIREGGILTDSFGRIKRSMSSTSASAVRSYDGAAQRPEAQAFHRLLADITHDIEALAPDDDDDDEDEPRGSRGGSDAAEDNYL.

Disordered stretches follow at residues 164-193, 212-295, and 544-571; these read AGVD…GTAE, AEAR…PQDP, and LAPD…DNYL. Residues 184–193 are compositionally biased toward basic and acidic residues; it reads PEKRRVGTAE. Gly residues predominate over residues 212–223; the sequence is AEARAGGGGGGS. Residues 237–251 are compositionally biased toward basic and acidic residues; the sequence is WERRQTFSGSWERRH. Residues 253–264 show a composition bias toward gly residues; it reads GGGGGGGAGKPG. Residues 286–295 are compositionally biased toward pro residues; sequence GPNPLDPQDP. Over residues 545–555 the composition is skewed to acidic residues; sequence APDDDDDDEDE.

The protein belongs to the CCM2 family.

The chain is Cerebral cavernous malformations 2 protein-like (CCM2L) from Homo sapiens (Human).